A 422-amino-acid chain; its full sequence is Elongation factor 1-alpha (422 aa).

The 217-residue stretch at 5 to 221 (KPHMNLAVIG…DELKEPEKPS (217 aa)) folds into the tr-type G domain. Positions 14–21 (GHIDHGKS) are G1. 14–21 (GHIDHGKS) is a binding site for GTP. Ser-21 is a binding site for Mg(2+). The interval 70 to 74 (GITID) is G2. The tract at residues 91-94 (DCPG) is G3. Residues 91–95 (DCPGH) and 146–149 (NKMD) contribute to the GTP site. Residues 146–149 (NKMD) are G4. A G5 region spans residues 185–187 (SAF).

It belongs to the TRAFAC class translation factor GTPase superfamily. Classic translation factor GTPase family. EF-Tu/EF-1A subfamily.

Its subcellular location is the cytoplasm. It carries out the reaction GTP + H2O = GDP + phosphate + H(+). Its function is as follows. GTP hydrolase that promotes the GTP-dependent binding of aminoacyl-tRNA to the A-site of ribosomes during protein biosynthesis. In Methanosarcina acetivorans (strain ATCC 35395 / DSM 2834 / JCM 12185 / C2A), this protein is Elongation factor 1-alpha.